Here is a 203-residue protein sequence, read N- to C-terminus: MTNSSDDFTQSAEPFKLFAEWLADAAKSEPNDPNAVALATVDPDGLPNVRMVLLKDFDETGFVFYTNYESKKGQEILSAEKAAMCFHWKSLRRQVRVRGPVEKVSDAEADAYYASRPRGSRIGAWASKQSRPLESRFALEKAVAEYTAKYAIGDIPRPPYWSGFRIRPVSIEFWHDRPFRLHDRVLFTRPTPEGDWNKDRLYP.

FMN is bound by residues 50–55 (RMVLLK), 65–66 (YT), lysine 71, lysine 72, and glutamine 94. Position 55 (lysine 55) interacts with substrate. The substrate site is built by tyrosine 112, arginine 116, and serine 120. FMN is bound by residues 129–130 (QS) and tryptophan 174. 180 to 182 (RLH) contributes to the substrate binding site. Arginine 184 is a binding site for FMN.

Belongs to the pyridoxamine 5'-phosphate oxidase family. As to quaternary structure, homodimer. Requires FMN as cofactor.

The enzyme catalyses pyridoxamine 5'-phosphate + O2 + H2O = pyridoxal 5'-phosphate + H2O2 + NH4(+). It carries out the reaction pyridoxine 5'-phosphate + O2 = pyridoxal 5'-phosphate + H2O2. Its pathway is cofactor metabolism; pyridoxal 5'-phosphate salvage; pyridoxal 5'-phosphate from pyridoxamine 5'-phosphate: step 1/1. The protein operates within cofactor metabolism; pyridoxal 5'-phosphate salvage; pyridoxal 5'-phosphate from pyridoxine 5'-phosphate: step 1/1. Its function is as follows. Catalyzes the oxidation of either pyridoxine 5'-phosphate (PNP) or pyridoxamine 5'-phosphate (PMP) into pyridoxal 5'-phosphate (PLP). The chain is Pyridoxine/pyridoxamine 5'-phosphate oxidase from Brucella canis (strain ATCC 23365 / NCTC 10854 / RM-666).